We begin with the raw amino-acid sequence, 341 residues long: Glycerol-3-phosphate dehydrogenase [NAD(P)+] (341 aa).

4 residues coordinate NADPH: S15, W16, R36, and K110. Residues K110, G139, and S141 each contribute to the sn-glycerol 3-phosphate site. A143 is a binding site for NADPH. Residues K194, D247, S257, R258, and N259 each contribute to the sn-glycerol 3-phosphate site. K194 acts as the Proton acceptor in catalysis. Residue R258 participates in NADPH binding. Residues V282 and E284 each contribute to the NADPH site.

This sequence belongs to the NAD-dependent glycerol-3-phosphate dehydrogenase family.

It is found in the cytoplasm. It catalyses the reaction sn-glycerol 3-phosphate + NAD(+) = dihydroxyacetone phosphate + NADH + H(+). It carries out the reaction sn-glycerol 3-phosphate + NADP(+) = dihydroxyacetone phosphate + NADPH + H(+). It functions in the pathway membrane lipid metabolism; glycerophospholipid metabolism. Catalyzes the reduction of the glycolytic intermediate dihydroxyacetone phosphate (DHAP) to sn-glycerol 3-phosphate (G3P), the key precursor for phospholipid synthesis. The protein is Glycerol-3-phosphate dehydrogenase [NAD(P)+] of Xanthomonas oryzae pv. oryzae (strain MAFF 311018).